A 445-amino-acid chain; its full sequence is Homogentisate 1,2-dioxygenase (445 aa).

Lys-98 carries the post-translational modification N6-acetyllysine. Fe cation is bound by residues His-335, Glu-341, and His-371. Lys-414 bears the N6-succinyllysine mark.

This sequence belongs to the homogentisate dioxygenase family. As to quaternary structure, homohexamer arranged as a dimer of trimers. Fe cation is required as a cofactor.

It carries out the reaction homogentisate + O2 = 4-maleylacetoacetate + H(+). It functions in the pathway amino-acid degradation; L-phenylalanine degradation; acetoacetate and fumarate from L-phenylalanine: step 4/6. In terms of biological role, catalyzes the conversion of homogentisate to maleylacetoacetate. The chain is Homogentisate 1,2-dioxygenase (Hgd) from Mus musculus (Mouse).